We begin with the raw amino-acid sequence, 540 residues long: Chaperonin GroEL (540 aa).

Residues 29 to 32, 86 to 90, Gly-413, 476 to 478, and Asp-492 each bind ATP; these read TLGP, DGTTT, and NAA.

The protein belongs to the chaperonin (HSP60) family. Forms a cylinder of 14 subunits composed of two heptameric rings stacked back-to-back. Interacts with the co-chaperonin GroES.

The protein resides in the cytoplasm. The enzyme catalyses ATP + H2O + a folded polypeptide = ADP + phosphate + an unfolded polypeptide.. Together with its co-chaperonin GroES, plays an essential role in assisting protein folding. The GroEL-GroES system forms a nano-cage that allows encapsulation of the non-native substrate proteins and provides a physical environment optimized to promote and accelerate protein folding. The chain is Chaperonin GroEL from Streptococcus pneumoniae (strain ATCC 700669 / Spain 23F-1).